Consider the following 204-residue polypeptide: Thymidylate kinase (204 aa).

11 to 18 lines the ATP pocket; the sequence is GLDKSGKT.

The protein belongs to the thymidylate kinase family.

The enzyme catalyses dTMP + ATP = dTDP + ADP. Its pathway is pyrimidine metabolism; dTTP biosynthesis. The polypeptide is Thymidylate kinase (TMK) (Vaccinia virus (strain Ankara) (VACV)).